Here is a 207-residue protein sequence, read N- to C-terminus: MPSIAVYNMNRQQVGELQLADDVFNADVKEHLMHLALRIQLANRRAGTVKTKTRSEVAGSGKKPFKQKGTGNARQGCVRAPQYPGGGVAFGPQPKEYHLSMNKKARKSAICSALSLQCKNNRITVMDKLDFSSISTKAFVDFMKRFEIERSLIITDDFSNNLQLSCRNVPHVKLLKHDALNIHDILKYKNIIFTQGAVQSVEGVLNK.

The disordered stretch occupies residues 50–75 (KTKTRSEVAGSGKKPFKQKGTGNARQ).

Belongs to the universal ribosomal protein uL4 family. As to quaternary structure, part of the 50S ribosomal subunit.

In terms of biological role, one of the primary rRNA binding proteins, this protein initially binds near the 5'-end of the 23S rRNA. It is important during the early stages of 50S assembly. It makes multiple contacts with different domains of the 23S rRNA in the assembled 50S subunit and ribosome. Forms part of the polypeptide exit tunnel. This Pelobacter propionicus (strain DSM 2379 / NBRC 103807 / OttBd1) protein is Large ribosomal subunit protein uL4.